The chain runs to 570 residues: Adenine deaminase (570 aa).

Belongs to the metallo-dependent hydrolases superfamily. Adenine deaminase family. Mn(2+) serves as cofactor.

The enzyme catalyses adenine + H2O + H(+) = hypoxanthine + NH4(+). In Oleidesulfovibrio alaskensis (strain ATCC BAA-1058 / DSM 17464 / G20) (Desulfovibrio alaskensis), this protein is Adenine deaminase.